The chain runs to 172 residues: Putative phosphoesterase BCG9842_B4061 (172 aa).

Catalysis depends on histidine 34, which acts as the Proton donor. Short sequence motifs (HXTX) lie at residues histidine 34–leucine 37 and histidine 115–isoleucine 118. The active-site Proton acceptor is the histidine 115.

This sequence belongs to the 2H phosphoesterase superfamily. YjcG family.

In Bacillus cereus (strain G9842), this protein is Putative phosphoesterase BCG9842_B4061.